A 154-amino-acid chain; its full sequence is Aspartate carbamoyltransferase regulatory chain (154 aa).

Positions 110, 115, 136, and 139 each coordinate Zn(2+).

Belongs to the PyrI family. As to quaternary structure, contains catalytic and regulatory chains. Requires Zn(2+) as cofactor.

In terms of biological role, involved in allosteric regulation of aspartate carbamoyltransferase. The polypeptide is Aspartate carbamoyltransferase regulatory chain (Halobacterium salinarum (strain ATCC 700922 / JCM 11081 / NRC-1) (Halobacterium halobium)).